We begin with the raw amino-acid sequence, 354 residues long: Ornithine transcarbamylase, mitochondrial (354 aa).

The N-terminal 32 residues, 1 to 32 (MLFNLRILLNNAAFRNGHNFMVRNFRCGQPLQ), are a transit peptide targeting the mitochondrion. Residue Lys-70 is modified to N6-acetyllysine; alternate. Residue Lys-70 is modified to N6-succinyllysine; alternate. Lys-80 carries the post-translational modification N6-succinyllysine. At Lys-88 the chain carries N6-acetyllysine; alternate. Lys-88 bears the N6-succinyllysine; alternate mark. A carbamoyl phosphate-binding site is contributed by 90-93 (STRT). At Ser-133 the chain carries Phosphoserine. Arg-141 is a carbamoyl phosphate binding site. The residue at position 144 (Lys-144) is an N6-acetyllysine; alternate. Lys-144 bears the N6-succinyllysine; alternate mark. Positions 168 and 171 each coordinate carbamoyl phosphate. L-ornithine is bound at residue Asn-199. An N6-acetyllysine; alternate mark is found at Lys-221, Lys-231, and Lys-238. N6-succinyllysine; alternate is present on residues Lys-221, Lys-231, and Lys-238. Residue Lys-243 is modified to N6-acetyllysine. Asp-263, Ser-267, and Met-268 together coordinate L-ornithine. N6-succinyllysine occurs at positions 274 and 289. At Lys-292 the chain carries N6-acetyllysine; alternate. Lys-292 carries the N6-succinyllysine; alternate modification. The active-site Proton acceptor is Cys-303. 303–304 (CL) is a binding site for carbamoyl phosphate. N6-acetyllysine; alternate is present on Lys-307. N6-succinyllysine; alternate is present on Lys-307. Arg-330 lines the carbamoyl phosphate pocket.

This sequence belongs to the aspartate/ornithine carbamoyltransferase superfamily. OTCase family. Homotrimer. Post-translationally, acetylation at Lys-88 negatively regulates ornithine carbamoyltransferase activity in response to nutrient signals. In terms of tissue distribution, mainly expressed in liver and intestinal mucosa.

It is found in the mitochondrion matrix. It catalyses the reaction carbamoyl phosphate + L-ornithine = L-citrulline + phosphate + H(+). Its pathway is nitrogen metabolism; urea cycle; L-citrulline from L-ornithine and carbamoyl phosphate: step 1/1. Its activity is regulated as follows. Negatively regulated by lysine acetylation. Catalyzes the second step of the urea cycle, the condensation of carbamoyl phosphate with L-ornithine to form L-citrulline. The urea cycle ensures the detoxification of ammonia by converting it to urea for excretion. The protein is Ornithine transcarbamylase, mitochondrial of Homo sapiens (Human).